A 300-amino-acid chain; its full sequence is Protoheme IX farnesyltransferase (300 aa).

The next 9 helical transmembrane spans lie at 21 to 43 (PRVVELLLLTTVPTMILAQRGVP), 45 to 65 (PLSVLSVLLGGAMSAGAAGAF), 94 to 114 (ASLIFAWMLCVISVLWFLLFV), 117 to 137 (LSALLSAIAVFLYAFFYSIVL), 145 to 167 (IVWGGLAGCMPVLIAWAAVTGSI), 171 to 193 (AIVLFAVVFLWTPPHYWPLSIHY), 213 to 233 (LVVLQVLLYAFAVVACTLLLI), 235 to 255 (VAHMTPLYGLFSAVLGAWFVY), and 272 to 292 (AMHIFSLSNTYLSLVFLSVGI).

Belongs to the UbiA prenyltransferase family. Protoheme IX farnesyltransferase subfamily.

The protein resides in the cell membrane. The enzyme catalyses heme b + (2E,6E)-farnesyl diphosphate + H2O = Fe(II)-heme o + diphosphate. It participates in porphyrin-containing compound metabolism; heme O biosynthesis; heme O from protoheme: step 1/1. Functionally, converts heme B (protoheme IX) to heme O by substitution of the vinyl group on carbon 2 of heme B porphyrin ring with a hydroxyethyl farnesyl side group. This is Protoheme IX farnesyltransferase from Tropheryma whipplei (strain TW08/27) (Whipple's bacillus).